A 127-amino-acid polypeptide reads, in one-letter code: Small ribosomal subunit protein uS12 (127 aa).

Positions 11-20 (GRKPKKKKSK) are enriched in basic residues. A disordered region spans residues 11–30 (GRKPKKKKSKAPALQGNPQK). Asp89 is subject to 3-methylthioaspartic acid. The disordered stretch occupies residues 105–127 (AGVEGRRQSRSKYGAKRPKDQKK). A compositionally biased stretch (basic residues) spans 112-127 (QSRSKYGAKRPKDQKK).

Belongs to the universal ribosomal protein uS12 family. As to quaternary structure, part of the 30S ribosomal subunit. Contacts proteins S8 and S17. May interact with IF1 in the 30S initiation complex.

With S4 and S5 plays an important role in translational accuracy. Its function is as follows. Interacts with and stabilizes bases of the 16S rRNA that are involved in tRNA selection in the A site and with the mRNA backbone. Located at the interface of the 30S and 50S subunits, it traverses the body of the 30S subunit contacting proteins on the other side and probably holding the rRNA structure together. The combined cluster of proteins S8, S12 and S17 appears to hold together the shoulder and platform of the 30S subunit. The protein is Small ribosomal subunit protein uS12 of Thermotoga maritima (strain ATCC 43589 / DSM 3109 / JCM 10099 / NBRC 100826 / MSB8).